We begin with the raw amino-acid sequence, 627 residues long: UvrABC system protein C (627 aa).

Residues 22–100 (NNPGVYRMFN…IKRLRPRFNV (79 aa)) form the GIY-YIG domain. The UVR domain maps to 210–245 (QSVKDHLAAAMQAASADLDFEHAAVYRDRLAALSHV).

The protein belongs to the UvrC family. Interacts with UvrB in an incision complex.

It localises to the cytoplasm. Its function is as follows. The UvrABC repair system catalyzes the recognition and processing of DNA lesions. UvrC both incises the 5' and 3' sides of the lesion. The N-terminal half is responsible for the 3' incision and the C-terminal half is responsible for the 5' incision. This is UvrABC system protein C from Brucella abortus biovar 1 (strain 9-941).